The chain runs to 198 residues: Recombination protein RecR (198 aa).

Residues 57-72 form a C4-type zinc finger; the sequence is CRVCANIADENPCGIC. Positions 80-175 constitute a Toprim domain; that stretch reads GLICVVERPR…RVTRLAFGLP (96 aa).

This sequence belongs to the RecR family.

In terms of biological role, may play a role in DNA repair. It seems to be involved in an RecBC-independent recombinational process of DNA repair. It may act with RecF and RecO. In Desulforudis audaxviator (strain MP104C), this protein is Recombination protein RecR.